Consider the following 465-residue polypeptide: Hexokinase-4 (465 aa).

The 445-residue stretch at 10–454 folds into the Hexokinase domain; that stretch reads ATKKEKVEQI…SGRGAALVSA (445 aa). Positions 67-203 are hexokinase small subdomain; sequence EGSEVGDFLS…DFEMDVVAMV (137 aa). An ATP-binding site is contributed by 78–83; it reads DLGGTN. Substrate-binding positions include 151-152, 168-169, and 204-205; these read SF, TK, and ND. Positions 204 to 443 are hexokinase large subdomain; the sequence is NDTVATMISC…CEITFIESEE (240 aa). Residue Thr-228 participates in ATP binding. Substrate-binding residues include Asn-231, Glu-256, and Glu-290. Residues 295-296, 332-336, and 411-415 each bind ATP; these read GK, TRFVS, and SVYKL.

This sequence belongs to the hexokinase family. Monomer. Interacts with MIDN; the interaction occurs preferentially at low glucose levels and results in inhibition of hexokinase activity. Interacts with GCKR; leading to sequestration in the nucleus.

The protein resides in the cytoplasm. Its subcellular location is the nucleus. It localises to the mitochondrion. The enzyme catalyses a D-hexose + ATP = a D-hexose 6-phosphate + ADP + H(+). The catalysed reaction is D-fructose + ATP = D-fructose 6-phosphate + ADP + H(+). It catalyses the reaction D-glucose + ATP = D-glucose 6-phosphate + ADP + H(+). It carries out the reaction D-mannose + ATP = D-mannose 6-phosphate + ADP + H(+). Its pathway is carbohydrate metabolism; hexose metabolism. The protein operates within carbohydrate degradation; glycolysis; D-glyceraldehyde 3-phosphate and glycerone phosphate from D-glucose: step 1/4. Its activity is regulated as follows. Subject to allosteric regulation. Low glucose and high fructose-6-phosphate triggers association with the inhibitor GCKR followed by sequestration in the nucleus. Functionally, catalyzes the phosphorylation of hexose, such as D-glucose, D-fructose and D-mannose, to hexose 6-phosphate (D-glucose 6-phosphate, D-fructose 6-phosphate and D-mannose 6-phosphate, respectively). Compared to other hexokinases, has a weak affinity for D-glucose, and is effective only when glucose is abundant. Mainly expressed in pancreatic beta cells and the liver and constitutes a rate-limiting step in glucose metabolism in these tissues. Since insulin secretion parallels glucose metabolism and the low glucose affinity of GCK ensures that it can change its enzymatic activity within the physiological range of glucose concentrations, GCK acts as a glucose sensor in the pancreatic beta cell. In pancreas, plays an important role in modulating insulin secretion. In liver, helps to facilitate the uptake and conversion of glucose by acting as an insulin-sensitive determinant of hepatic glucose usage. Required to provide D-glucose 6-phosphate for the synthesis of glycogen. Mediates the initial step of glycolysis by catalyzing phosphorylation of D-glucose to D-glucose 6-phosphate. The sequence is that of Hexokinase-4 from Mus musculus (Mouse).